We begin with the raw amino-acid sequence, 489 residues long: Betaine aldehyde dehydrogenase (489 aa).

Residues Thr26 and Asp93 each coordinate K(+). Gly150–Trp152 provides a ligand contact to NAD(+). The active-site Charge relay system is Lys162. An NAD(+)-binding site is contributed by Lys176–Glu179. Val180 contributes to the K(+) binding site. Residue Gly229–Thr232 participates in NAD(+) binding. Leu245 is a binding site for K(+). The active-site Proton acceptor is the Glu251. NAD(+) contacts are provided by Gly253, Cys285, and Glu386. Cys285 serves as the catalytic Nucleophile. Cys285 bears the Cysteine sulfenic acid (-SOH) mark. Lys456 and Gly459 together coordinate K(+). Glu463 functions as the Charge relay system in the catalytic mechanism.

It belongs to the aldehyde dehydrogenase family. Dimer of dimers. K(+) is required as a cofactor.

The enzyme catalyses betaine aldehyde + NAD(+) + H2O = glycine betaine + NADH + 2 H(+). It participates in amine and polyamine biosynthesis; betaine biosynthesis via choline pathway; betaine from betaine aldehyde: step 1/1. Its function is as follows. Involved in the biosynthesis of the osmoprotectant glycine betaine. Catalyzes the irreversible oxidation of betaine aldehyde to the corresponding acid. In Burkholderia ambifaria (strain ATCC BAA-244 / DSM 16087 / CCUG 44356 / LMG 19182 / AMMD) (Burkholderia cepacia (strain AMMD)), this protein is Betaine aldehyde dehydrogenase.